We begin with the raw amino-acid sequence, 905 residues long: Methionine--tRNA ligase, cytoplasmic (905 aa).

In terms of domain architecture, GST N-terminal spans Met-1–Met-75. Residues Gly-72–Phe-199 form the GST C-terminal domain. The 'HIGH' region motif lies at Pro-271–Asn-281. Residues Lys-591–Ser-595 carry the 'KMSKS' region motif. Lys-594 serves as a coordination point for ATP. Disordered stretches follow at residues Arg-813–Pro-874 and Leu-886–Lys-905. The span at Gly-841–Pro-874 shows a compositional bias: basic and acidic residues. One can recognise a WHEP-TRS domain in the interval Arg-844–Lys-900.

This sequence belongs to the class-I aminoacyl-tRNA synthetase family. In terms of assembly, monomer. Part of a multisubunit complex that groups tRNA ligases for Arg (RARS1), Asp (DARS1), Gln (QARS1), Ile (IARS1), Leu (LARS1), Lys (KARS1), Met (MARS1) the bifunctional ligase for Glu and Pro (EPRS1) and the auxiliary subunits AIMP1/p43, AIMP2/p38 and EEF1E1/p18.

It localises to the cytoplasm. The protein localises to the cytosol. The protein resides in the nucleus. It is found in the nucleolus. It carries out the reaction tRNA(Met) + L-methionine + ATP = L-methionyl-tRNA(Met) + AMP + diphosphate. In terms of biological role, catalyzes the specific attachment of an amino acid to its cognate tRNA in a 2 step reaction: the amino acid (AA) is first activated by ATP to form AA-AMP and then transferred to the acceptor end of the tRNA. Plays a role in the synthesis of ribosomal RNA in the nucleolus. The protein is Methionine--tRNA ligase, cytoplasmic (mars1) of Xenopus laevis (African clawed frog).